The sequence spans 439 residues: MQSQYSHIVLGLGATGLSVVRYLCGKGITPLVMDSRRQPPGAETLASSFPEVKLIAGGFDCRYLVQATQIIISPGIAMNTPEVRAALDMGIEVIGDVELFAREIADRKPCVIGITGSNGKTTVTTLVGEMLREAGIAVAVGGNIGIPALDLLKENADIFVLELSSFQLETTHSLNCVASTCLNVTEDHMDRYSDMDAYRKAKLRLYHQSRSIIFNRDDALTIPTEPMNQNSFGLAPPEGDEWGICDSKIYHGHSEIMPITEVSLIGSHNHANLLAAMALVYAVGVDKQVMANVARTFTGLSHRCEVVGVKGGVTYVNDSKATNVGATVAALDGLSDHLGDIILIAGGDGKGADFSPLEEPLTKVTHLITLGRDGNKIAALKEGAIKVDSMAAAVAKAAQLATSGDIVLLSPACASLDMYSNFMARGDDFRSQVEQLDGE.

Glycine 116–threonine 122 serves as a coordination point for ATP.

Belongs to the MurCDEF family.

The protein localises to the cytoplasm. The enzyme catalyses UDP-N-acetyl-alpha-D-muramoyl-L-alanine + D-glutamate + ATP = UDP-N-acetyl-alpha-D-muramoyl-L-alanyl-D-glutamate + ADP + phosphate + H(+). Its pathway is cell wall biogenesis; peptidoglycan biosynthesis. Cell wall formation. Catalyzes the addition of glutamate to the nucleotide precursor UDP-N-acetylmuramoyl-L-alanine (UMA). In Shewanella oneidensis (strain ATCC 700550 / JCM 31522 / CIP 106686 / LMG 19005 / NCIMB 14063 / MR-1), this protein is UDP-N-acetylmuramoylalanine--D-glutamate ligase.